The sequence spans 227 residues: Cytochrome c oxidase subunit 2 (227 aa).

Over 1-14 (MAHRAQVGLQDATS) the chain is Mitochondrial intermembrane. Residues 15-45 (PIMEELVIFHDHALMIIFLICFLVLYALFLT) traverse the membrane as a helical segment. The Mitochondrial matrix portion of the chain corresponds to 46–59 (LTTKLTNTNISDAQ). A helical transmembrane segment spans residues 60 to 87 (EMETIWTTLPAIILILIALPSLRILYLT). At 88 to 227 (DEINDPSFTI…IFEMGPVFAL (140 aa)) the chain is on the mitochondrial intermembrane side. Cu cation-binding residues include histidine 161, cysteine 196, glutamate 198, cysteine 200, histidine 204, and methionine 207. Position 198 (glutamate 198) interacts with Mg(2+).

It belongs to the cytochrome c oxidase subunit 2 family. As to quaternary structure, component of the cytochrome c oxidase (complex IV, CIV), a multisubunit enzyme composed of 14 subunits. The complex is composed of a catalytic core of 3 subunits MT-CO1, MT-CO2 and MT-CO3, encoded in the mitochondrial DNA, and 11 supernumerary subunits COX4I, COX5A, COX5B, COX6A, COX6B, COX6C, COX7A, COX7B, COX7C, COX8 and NDUFA4, which are encoded in the nuclear genome. The complex exists as a monomer or a dimer and forms supercomplexes (SCs) in the inner mitochondrial membrane with NADH-ubiquinone oxidoreductase (complex I, CI) and ubiquinol-cytochrome c oxidoreductase (cytochrome b-c1 complex, complex III, CIII), resulting in different assemblies (supercomplex SCI(1)III(2)IV(1) and megacomplex MCI(2)III(2)IV(2)). Found in a complex with TMEM177, COA6, COX18, COX20, SCO1 and SCO2. Interacts with TMEM177 in a COX20-dependent manner. Interacts with COX20. Interacts with COX16. Requires Cu cation as cofactor.

The protein localises to the mitochondrion inner membrane. It carries out the reaction 4 Fe(II)-[cytochrome c] + O2 + 8 H(+)(in) = 4 Fe(III)-[cytochrome c] + 2 H2O + 4 H(+)(out). Component of the cytochrome c oxidase, the last enzyme in the mitochondrial electron transport chain which drives oxidative phosphorylation. The respiratory chain contains 3 multisubunit complexes succinate dehydrogenase (complex II, CII), ubiquinol-cytochrome c oxidoreductase (cytochrome b-c1 complex, complex III, CIII) and cytochrome c oxidase (complex IV, CIV), that cooperate to transfer electrons derived from NADH and succinate to molecular oxygen, creating an electrochemical gradient over the inner membrane that drives transmembrane transport and the ATP synthase. Cytochrome c oxidase is the component of the respiratory chain that catalyzes the reduction of oxygen to water. Electrons originating from reduced cytochrome c in the intermembrane space (IMS) are transferred via the dinuclear copper A center (CU(A)) of subunit 2 and heme A of subunit 1 to the active site in subunit 1, a binuclear center (BNC) formed by heme A3 and copper B (CU(B)). The BNC reduces molecular oxygen to 2 water molecules using 4 electrons from cytochrome c in the IMS and 4 protons from the mitochondrial matrix. In Pongo pygmaeus (Bornean orangutan), this protein is Cytochrome c oxidase subunit 2 (MT-CO2).